The sequence spans 940 residues: Isoleucine--tRNA ligase (940 aa).

Residues 58–68 carry the 'HIGH' region motif; sequence PYANGSIHIGH. Residue Glu-564 participates in L-isoleucyl-5'-AMP binding. A 'KMSKS' region motif is present at residues 605 to 609; it reads KMSKS. Lys-608 serves as a coordination point for ATP. Zn(2+) contacts are provided by Cys-903, Cys-906, Cys-923, and Cys-926.

It belongs to the class-I aminoacyl-tRNA synthetase family. IleS type 1 subfamily. Monomer. The cofactor is Zn(2+).

The protein resides in the cytoplasm. The catalysed reaction is tRNA(Ile) + L-isoleucine + ATP = L-isoleucyl-tRNA(Ile) + AMP + diphosphate. Catalyzes the attachment of isoleucine to tRNA(Ile). As IleRS can inadvertently accommodate and process structurally similar amino acids such as valine, to avoid such errors it has two additional distinct tRNA(Ile)-dependent editing activities. One activity is designated as 'pretransfer' editing and involves the hydrolysis of activated Val-AMP. The other activity is designated 'posttransfer' editing and involves deacylation of mischarged Val-tRNA(Ile). The chain is Isoleucine--tRNA ligase from Shewanella sp. (strain MR-7).